The sequence spans 266 residues: Putative carbamate hydrolase RutD (266 aa).

The AB hydrolase-1 domain occupies 15-128; sequence AVLLSSGLGG…NAHSARCFDA (114 aa).

This sequence belongs to the AB hydrolase superfamily. Hydrolase RutD family.

The enzyme catalyses carbamate + 2 H(+) = NH4(+) + CO2. Involved in pyrimidine catabolism. May facilitate the hydrolysis of carbamate, a reaction that can also occur spontaneously. In Variovorax paradoxus (strain S110), this protein is Putative carbamate hydrolase RutD.